We begin with the raw amino-acid sequence, 329 residues long: NADH-quinone oxidoreductase subunit H (329 aa).

9 helical membrane-spanning segments follow: residues leucine 9–isoleucine 29, glycine 42–phenylalanine 62, leucine 75–isoleucine 95, isoleucine 117–glycine 137, isoleucine 154–valine 174, glycine 188–alanine 208, leucine 238–isoleucine 258, tryptophan 269–tryptophan 291, and tryptophan 309–isoleucine 329.

Belongs to the complex I subunit 1 family. NDH-1 is composed of 14 different subunits. Subunits NuoA, H, J, K, L, M, N constitute the membrane sector of the complex.

The protein resides in the cell inner membrane. The catalysed reaction is a quinone + NADH + 5 H(+)(in) = a quinol + NAD(+) + 4 H(+)(out). Its function is as follows. NDH-1 shuttles electrons from NADH, via FMN and iron-sulfur (Fe-S) centers, to quinones in the respiratory chain. The immediate electron acceptor for the enzyme in this species is believed to be ubiquinone. Couples the redox reaction to proton translocation (for every two electrons transferred, four hydrogen ions are translocated across the cytoplasmic membrane), and thus conserves the redox energy in a proton gradient. This subunit may bind ubiquinone. This is NADH-quinone oxidoreductase subunit H from Helicobacter acinonychis (strain Sheeba).